Here is a 474-residue protein sequence, read N- to C-terminus: Sialyltransferase-like protein 1 (474 aa).

The Cytoplasmic segment spans residues 1–14 (MRSHQAGRKLPLLQ). Residues 15-35 (LLGCVAVFSVFVFTIQSSFFA) traverse the membrane as a helical; Signal-anchor for type II membrane protein segment. Over 36 to 474 (DNNRKLDLQP…CVRHPLKLDT (439 aa)) the chain is Lumenal. 4 N-linked (GlcNAc...) asparagine glycosylation sites follow: Asn88, Asn120, Asn155, and Asn243. A disordered region spans residues 376–421 (RLQRSQQPTSSKRDGSGQFGNCKVWGDADPTKGPVSGSPDMSETRK).

It belongs to the glycosyltransferase 29 family. In terms of tissue distribution, highly expressed in inflorescences and siliques and at lower levels in roots, leaves and stems.

Its subcellular location is the golgi apparatus membrane. In terms of biological role, required for normal pollen grain germination and pollen tube growth. May not be required for pollen development and female gametophytic function. In Arabidopsis thaliana (Mouse-ear cress), this protein is Sialyltransferase-like protein 1.